The sequence spans 626 residues: MARIPEEVIDQVRNQADIVDIIGNYVQLKKQGRNYSGLCPFHGEKTPSFSVSPEKQIFHCFGCGKGGNVFSFLMEHDGLTFVESVKKVADMSHLDVDIELPEERDTSNLPKETSETAKMVEMHQLTAKLYHYILMETEEGAAALTYLKERGMSEQMMASFQIGFAPNHHATITSFLEKRGMDLQLAGTAGLLSERDDGQMVDRFRNRIMFPITNDRGQINAFSGRLFDRDDGPKYLNSPETPIFNKRRTLFHFSEARQAIRKQEEITLMEGFMDVISAEEAGVQNAVASMGTSLTEEHADLIKRLTNRAIICYDGDRAGIEAAYKAGTLLVERNRLDVFVLQLPAGKDPDDFIRASGADKFKEIYKQQRMTWTAFKINYLRKERNLQNETDKIAYIDDCLREIAKLDQAVERELYLKQLADEFELTIETLKQQLQQSLKNTHKERQNHSYNEPPIDDSFMGMIPQEDSEMLFSFEQPTKKLSAHTTAEQQLMKAMMENRDSFLLIKQLLGDTEFYHDNYQALYTYLIGYFAEGNDADPHKFMDSVPDAGMKGLISSLEMVISPDEQGKTQFEDYIKSLKRFKLEQAKKELEQQLAAFNRENDKENEIRVMLEIVQLNRKLNSGQLD.

The CHC2-type zinc finger occupies Cys-39–Cys-63. A Toprim domain is found at Glu-264–Gly-346. Mg(2+)-binding residues include Glu-270, Asp-314, and Asp-316.

Belongs to the DnaG primase family. As to quaternary structure, monomer. Interacts with DnaB. Zn(2+) is required as a cofactor. The cofactor is Mg(2+).

It catalyses the reaction ssDNA + n NTP = ssDNA/pppN(pN)n-1 hybrid + (n-1) diphosphate.. Functionally, RNA polymerase that catalyzes the synthesis of short RNA molecules used as primers for DNA polymerase during DNA replication. This Listeria innocua serovar 6a (strain ATCC BAA-680 / CLIP 11262) protein is DNA primase.